The chain runs to 1594 residues: Mucin-like protein (1594 aa).

Over 1–1530 (DTTAGPDTTS…YETREDGLEM (1530 aa)) the chain is Extracellular. TSP type-1 domains follow at residues 141 to 196 (DGGF…GSCP), 198 to 253 (DGNF…PPCP), and 255 to 310 (DGNF…GPCP). Disulfide bonds link Cys-153–Cys-190, Cys-157–Cys-195, Cys-168–Cys-180, Cys-210–Cys-247, Cys-214–Cys-252, Cys-225–Cys-237, Cys-267–Cys-304, Cys-271–Cys-309, and Cys-282–Cys-294. Residues 400-566 (LTISDDAFEQ…GVWFFRLEMN (167 aa)) enclose the NIDO domain. The 139-residue stretch at 568 to 706 (ILSLAGKKCN…RSCFGYTLRR (139 aa)) folds into the AMOP domain. In terms of domain architecture, VWFD spans 706-901 (RRGLIFGDPH…KWQINASQSL (196 aa)). EGF-like domains are found at residues 1063–1108 (LILL…QYCQ) and 1110–1156 (KIDA…SICE). 14 cysteine pairs are disulfide-bonded: Cys-1067–Cys-1075, Cys-1069–Cys-1096, Cys-1098–Cys-1107, Cys-1114–Cys-1127, Cys-1121–Cys-1141, Cys-1144–Cys-1155, Cys-1161–Cys-1173, Cys-1169–Cys-1182, Cys-1285–Cys-1296, Cys-1292–Cys-1305, Cys-1307–Cys-1320, Cys-1326–Cys-1341, Cys-1334–Cys-1350, and Cys-1352–Cys-1363. An EGF-like 3; calcium-binding domain is found at 1157–1191 (DIDECSDANVSKCDHSCINLPGSYVCDCNQGFSLE). Residues 1281 to 1321 (DINECTTHRHKCSQICHNLDGSYTCSCQPGFNLSPDQTTCE) enclose the EGF-like 4; calcium-binding domain. An EGF-like 5; calcium-binding domain is found at 1322–1364 (DIDECGLINEAHCEGSLEICINTMGSFRCECQDGFHRVNDTCQ). Residues 1531 to 1551 (IWLLVGVSVAVAVPLMIVIVI) form a helical membrane-spanning segment. Topologically, residues 1552–1593 (LYREYRRIAKQRRKTNNFDLRQWSGARERTIYSGFTNSKSAR) are cytoplasmic.

As to expression, component of the acid-insoluble and acid-soluble organic matrix of the aragonitic skeleton (at protein level).

Its subcellular location is the membrane. The sequence is that of Mucin-like protein from Acropora millepora (Staghorn coral).